A 353-amino-acid polypeptide reads, in one-letter code: METNFSIPLNETEEVLPEPAGHTVLWIFSLLVHGVTFVFGVLGNGLVIWVAGFRMTRTVNTICYLNLALADFSFSAILPFRMVSVAMREKWPFGSFLCKLVHVMIDINLFVSVYLITIIALDRCICVLHPAWAQNHRTMSLAKRVMTGLWIFTIVLTLPNFIFWTTISTTNGDTYCIFNFAFWGDTAVERLNVFITMAKVFLILHFIIGFSVPMSIITVCYGIIAAKIHRNHMIKSSRPLRVFAAVVASFFICWFPYELIGILMAVWLKEMLLNGKYKIILVLINPTSSLAFFNSCLNPILYVFMGRNFQERLIRSLPTSLERALTEVPDSAQTSNTDTTSASPPEETELQAM.

The Extracellular portion of the chain corresponds to 1–27; sequence METNFSIPLNETEEVLPEPAGHTVLWI. Asparagine 4 and asparagine 10 each carry an N-linked (GlcNAc...) asparagine glycan. The helical transmembrane segment at 28–50 threads the bilayer; sequence FSLLVHGVTFVFGVLGNGLVIWV. The Cytoplasmic segment spans residues 51-61; it reads AGFRMTRTVNT. The helical transmembrane segment at 62–83 threads the bilayer; it reads ICYLNLALADFSFSAILPFRMV. The Extracellular portion of the chain corresponds to 84–100; that stretch reads SVAMREKWPFGSFLCKL. A disulfide bridge connects residues cysteine 98 and cysteine 176. Residues 101–121 traverse the membrane as a helical segment; the sequence is VHVMIDINLFVSVYLITIIAL. Residues 122 to 140 are Cytoplasmic-facing; it reads DRCICVLHPAWAQNHRTMS. A helical transmembrane segment spans residues 141 to 162; sequence LAKRVMTGLWIFTIVLTLPNFI. Residues 163–205 lie on the Extracellular side of the membrane; it reads FWTTISTTNGDTYCIFNFAFWGDTAVERLNVFITMAKVFLILH. The chain crosses the membrane as a helical span at residues 206 to 226; it reads FIIGFSVPMSIITVCYGIIAA. Residues 227 to 242 lie on the Cytoplasmic side of the membrane; it reads KIHRNHMIKSSRPLRV. Residues 243-266 form a helical membrane-spanning segment; the sequence is FAAVVASFFICWFPYELIGILMAV. The Extracellular portion of the chain corresponds to 267-286; sequence WLKEMLLNGKYKIILVLINP. Residues 287 to 306 form a helical membrane-spanning segment; sequence TSSLAFFNSCLNPILYVFMG. The Cytoplasmic portion of the chain corresponds to 307-353; the sequence is RNFQERLIRSLPTSLERALTEVPDSAQTSNTDTTSASPPEETELQAM. The tract at residues 327–353 is disordered; that stretch reads EVPDSAQTSNTDTTSASPPEETELQAM. The segment covering 331 to 343 has biased composition (polar residues); that stretch reads SAQTSNTDTTSAS.

The protein belongs to the G-protein coupled receptor 1 family. Detected in various tissues with highest expression in lung.

The protein resides in the cell membrane. In terms of biological role, low affinity receptor for N-formyl-methionyl peptides, which are powerful neutrophils chemotactic factors. Binding of FMLP to the receptor causes activation of neutrophils. This response is mediated via a G-protein that activates a phosphatidylinositol-calcium second messenger system. Acts as a receptor for humanin. In Homo sapiens (Human), this protein is N-formyl peptide receptor 3 (FPR3).